Here is a 122-residue protein sequence, read N- to C-terminus: Large ribosomal subunit protein uL14 (122 aa).

Belongs to the universal ribosomal protein uL14 family. Part of the 50S ribosomal subunit. Forms a cluster with proteins L3 and L19. In the 70S ribosome, L14 and L19 interact and together make contacts with the 16S rRNA in bridges B5 and B8.

In terms of biological role, binds to 23S rRNA. Forms part of two intersubunit bridges in the 70S ribosome. The chain is Large ribosomal subunit protein uL14 from Methylobacterium radiotolerans (strain ATCC 27329 / DSM 1819 / JCM 2831 / NBRC 15690 / NCIMB 10815 / 0-1).